Reading from the N-terminus, the 86-residue chain is MRLDKFLKVSRLIKRRTLAKEVADQGRISINGNQAKASSDVKPGDELTVRFGQKLVTVQVNELKDTTKKEEAANMYTILKEEKLGE.

The 62-residue stretch at 1–62 (MRLDKFLKVS…QKLVTVQVNE (62 aa)) folds into the S4 RNA-binding domain.

It belongs to the RqcP family. Associates with stalled 50S ribosomal subunits. Binds to RqcH, 23S rRNA and the P-site tRNA. Does not require RqcH for association with 50S subunits. Crystallized 50S subunits are variously associated with an A/P-site tRNA with or without RqcH, as well as with P- and E-site tRNAs but no RqcH. Displaced from the 50S subunit by puromycin but not thiostrepton.

In terms of biological role, key component of the ribosome quality control system (RQC), a ribosome-associated complex that mediates the extraction of incompletely synthesized nascent chains from stalled ribosomes and their subsequent degradation. RqcH recruits Ala-charged tRNA, and with RqcP directs the elongation of stalled nascent chains on 50S ribosomal subunits, leading to non-templated C-terminal alanine extensions (Ala tail). The Ala tail promotes nascent chain degradation. RqcP is associated with the translocation-like movement of the peptidyl-tRNA from the A-site into the P-site. RqcH, RqcP and charged tRNA(Ala) are necessary and sufficient to add an Ala tail to a model stalled nascent peptide; does not add Val. The chain is RQC P-site tRNA stabilizing factor from Bacillus subtilis (strain 168).